Reading from the N-terminus, the 429-residue chain is UDP-N-acetylglucosamine 1-carboxyvinyltransferase (429 aa).

22–23 (KN) contacts phosphoenolpyruvate. Arginine 102 provides a ligand contact to UDP-N-acetyl-alpha-D-glucosamine. Catalysis depends on cysteine 126, which acts as the Proton donor. At cysteine 126 the chain carries 2-(S-cysteinyl)pyruvic acid O-phosphothioketal. Residues 131-135 (RPVDL), aspartate 316, and isoleucine 338 each bind UDP-N-acetyl-alpha-D-glucosamine.

This sequence belongs to the EPSP synthase family. MurA subfamily.

It localises to the cytoplasm. It catalyses the reaction phosphoenolpyruvate + UDP-N-acetyl-alpha-D-glucosamine = UDP-N-acetyl-3-O-(1-carboxyvinyl)-alpha-D-glucosamine + phosphate. It functions in the pathway cell wall biogenesis; peptidoglycan biosynthesis. Its function is as follows. Cell wall formation. Adds enolpyruvyl to UDP-N-acetylglucosamine. This is UDP-N-acetylglucosamine 1-carboxyvinyltransferase from Nitrobacter hamburgensis (strain DSM 10229 / NCIMB 13809 / X14).